The sequence spans 865 residues: MERAGPGSARPQQQWDQDSVEAWLDDHWDFTFSYFVRKGTREMVNAWFAERVHTIPVCKEGIKGHTESCSCPLQPSPRAESSVPGTPTRKISASEFDRPLRPIVIKDSEGTVSFLSDSDKKEQMPLTSPRFDNDEGDQCSRLLELVKDISSHLDVTALCHKIFLHIHGLISADRYSLFLVCEDSSNDKFLISRLFDVAEGSTLEEASNNCIRLEWNKGIVGHVAAFGEPLNIKDAYEDPRFNAEVDQITGYKTQSILCMPIKNHREEVVGVAQAINKKSGNGGTFTEKDEKDFAAYLAFCGIVLHNAQLYETSLLENKRNQVLLDLASLIFEEQQSLEVILKKIAATIISFMQVQKCTIFIVDEDCSDSFSSVFHMECEELEKSSDTLTRERDANRINYMYAQYVKNTMEPLNIPDVSKDKRFPWTNENMGNINQQCIRSLLCTPIKNGKKNKVIGVCQLVNKMEETTGKVKAFNRNDEQFLEAFVIFCGLGIQNTQMYEAVERAMAKQMVTLEVLSYHASAAEEETRELQSLAAAVVPSAQTLKITDFSFSDFELSDLETALCTIRMFTDLNLVQNFQMKHEVLCKWILSVKKNYRKNVAYHNWRHAFNTAQCMFAALKAGKIQKRLTDLEILALLIAALSHDLDHRGVNNSYIQRSEHPLAQLYCHSIMEHHHFDQCLMILNSPGNQILSGLSIEEYKTTLKIIKQAILATDLALYIKRRGEFFELIMKNQFNLEDPHQKELFLAMLMTACDLSAITKPWPIQQRIAELVATEFFDQGDRERKELNIEPADLMNREKKNKIPSMQVGFIDAICLQLYEALTHVSEDCFPLLDGCRKNRQKWQALAEQQEKTLINGESSQTKRN.

A Phosphoserine modification is found at S92. 2 GAF domains span residues 154-304 (DVTA…GIVL) and 336-493 (SLEV…GLGI). Residues 526-850 (ETRELQSLAA…QKWQALAEQQ (325 aa)) enclose the PDEase domain. H603 functions as the Proton donor in the catalytic mechanism. H607, H643, D644, and D754 together coordinate Zn(2+). Mg(2+) is bound at residue D644. Q807 serves as a coordination point for 3',5'-cyclic GMP.

The protein belongs to the cyclic nucleotide phosphodiesterase family. The cofactor is Zn(2+). Mg(2+) is required as a cofactor. Post-translationally, phosphorylation is regulated by binding of cGMP to the two allosteric sites. Phosphorylation by PRKG1 leads to its activation.

The catalysed reaction is 3',5'-cyclic GMP + H2O = GMP + H(+). The protein operates within purine metabolism; 3',5'-cyclic GMP degradation; GMP from 3',5'-cyclic GMP: step 1/1. Most potently inhibited by zaprinast and dipyridamole. In terms of biological role, plays a role in signal transduction by regulating the intracellular concentration of cyclic nucleotides. This phosphodiesterase catalyzes the specific hydrolysis of cGMP to 5'-GMP. Specifically regulates nitric-oxide-generated cGMP. The protein is cGMP-specific 3',5'-cyclic phosphodiesterase (PDE5A) of Bos taurus (Bovine).